Here is a 187-residue protein sequence, read N- to C-terminus: Pyridoxal 5'-phosphate synthase subunit PdxT (187 aa).

47-49 provides a ligand contact to L-glutamine; sequence GES. Cys76 serves as the catalytic Nucleophile. L-glutamine contacts are provided by residues Arg102 and 128–129; that span reads IR. Active-site charge relay system residues include His165 and Glu167.

The protein belongs to the glutaminase PdxT/SNO family. In the presence of PdxS, forms a dodecamer of heterodimers. Only shows activity in the heterodimer.

The catalysed reaction is aldehydo-D-ribose 5-phosphate + D-glyceraldehyde 3-phosphate + L-glutamine = pyridoxal 5'-phosphate + L-glutamate + phosphate + 3 H2O + H(+). It carries out the reaction L-glutamine + H2O = L-glutamate + NH4(+). It participates in cofactor biosynthesis; pyridoxal 5'-phosphate biosynthesis. Its function is as follows. Catalyzes the hydrolysis of glutamine to glutamate and ammonia as part of the biosynthesis of pyridoxal 5'-phosphate. The resulting ammonia molecule is channeled to the active site of PdxS. The polypeptide is Pyridoxal 5'-phosphate synthase subunit PdxT (Methanococcus maripaludis (strain C5 / ATCC BAA-1333)).